A 316-amino-acid polypeptide reads, in one-letter code: Phosducin-like protein 1 (316 aa).

The interval 1–61 is disordered; that stretch reads MEQNILNSIL…EDGDKEYEVD (61 aa). Residues 12–41 show a composition bias toward basic and acidic residues; sequence KFGDGDQERSDIRHNDSGDENDNHSDHEGN. The segment covering 49–61 has biased composition (acidic residues); that stretch reads EGNEDGDKEYEVD. Positions 95-290 constitute a Phosducin domain; it reads SDYAEHREKQ…LLSSYDIIPN (196 aa). Positions 102–156 form a coiled coil; that stretch reads EKQKQKYLQKKYETQKMLEKMCFTTRDQPPPTEEENQLDSDDDDLERIRKARMEQ. The segment at 175 to 316 is thioredoxin fold; sequence FGYFKQIDSS…RPESDDDNDD (142 aa). Positions 293–316 are disordered; sequence KAKNSNWETSLSRKRPESDDDNDD.

This sequence belongs to the phosducin family.

It localises to the cytoplasm. Its function is as follows. Required for normal chemotaxis in response to cAMP and folate. Required for the heterodimerization of the G protein beta and gamma subunits gpbA and gpgA, which is itself thought to be necessary for prenylation of the gamma subunit gpgA and its association with plasma membranes. This Dictyostelium discoideum (Social amoeba) protein is Phosducin-like protein 1 (phlp1).